Here is a 92-residue protein sequence, read N- to C-terminus: Acylphosphatase (92 aa).

Residues 5–92 form the Acylphosphatase-like domain; sequence QVQLFVRGRV…GDFFDFRITD (88 aa). Residues Arg20 and Asn38 contribute to the active site.

It belongs to the acylphosphatase family.

It carries out the reaction an acyl phosphate + H2O = a carboxylate + phosphate + H(+). The polypeptide is Acylphosphatase (acyP) (Sorangium cellulosum (strain So ce56) (Polyangium cellulosum (strain So ce56))).